Here is a 210-residue protein sequence, read N- to C-terminus: GTP pyrophosphokinase YwaC (210 aa).

This sequence belongs to the RelA/SpoT family. In terms of assembly, homotetramer.

The enzyme catalyses GTP + ATP = guanosine 3'-diphosphate 5'-triphosphate + AMP. The protein operates within purine metabolism; ppGpp biosynthesis; ppGpp from GTP: step 1/2. Its function is as follows. Functions as a (p)ppGpp synthase; GDP can be used instead of GTP, resulting in an increase of (p)ppGpp synthesis. Overexpression in relA mutants (triple relA-yjbM-ywaC deletions and single relA deletions) leads to growth arrest; GTP levels fall drastically, various guanine-related nucleotides are synthesized (ppGp or pGpp), the cellular transcriptional profile changes dramatically and 70S ribosome dimerization occurs. Overexpression in the presence of a wild-type relA gene does not have these effects. In eubacteria ppGpp (guanosine 3'-diphosphate 5'-diphosphate) is a mediator of the stringent response that coordinates a variety of cellular activities in response to changes in nutritional abundance. activities in response to changes in nutritional abundance. YwaC has probably a minor role in stringent response. This Bacillus subtilis (strain 168) protein is GTP pyrophosphokinase YwaC (ywaC).